The chain runs to 376 residues: Putative F-box protein At1g53370 (376 aa).

Positions 22–71 (RNYIDSIPVDLLIDILSRFPPKSIARFYCVSKLWESILRGPDFTELYLTK) constitute an F-box domain.

The protein is Putative F-box protein At1g53370 of Arabidopsis thaliana (Mouse-ear cress).